The primary structure comprises 697 residues: Elongation factor G 2 (697 aa).

Residues 5–280 (SKYRNIGIFA…AVVDYLPAPD (276 aa)) enclose the tr-type G domain. Residues 14-21 (AHVDAGKT), 78-82 (DTPGH), and 132-135 (NKLD) contribute to the GTP site.

It belongs to the TRAFAC class translation factor GTPase superfamily. Classic translation factor GTPase family. EF-G/EF-2 subfamily.

The protein localises to the cytoplasm. Catalyzes the GTP-dependent ribosomal translocation step during translation elongation. During this step, the ribosome changes from the pre-translocational (PRE) to the post-translocational (POST) state as the newly formed A-site-bound peptidyl-tRNA and P-site-bound deacylated tRNA move to the P and E sites, respectively. Catalyzes the coordinated movement of the two tRNA molecules, the mRNA and conformational changes in the ribosome. This is Elongation factor G 2 from Shewanella sp. (strain MR-7).